A 218-amino-acid chain; its full sequence is Imidazole glycerol phosphate synthase subunit HisH (218 aa).

One can recognise a Glutamine amidotransferase type-1 domain in the interval 1-213; the sequence is MTTIIDYGIG…AALPTTEEAG (213 aa). The active-site Nucleophile is Cys-79. Active-site residues include His-188 and Glu-190.

As to quaternary structure, heterodimer of HisH and HisF.

The protein localises to the cytoplasm. The catalysed reaction is 5-[(5-phospho-1-deoxy-D-ribulos-1-ylimino)methylamino]-1-(5-phospho-beta-D-ribosyl)imidazole-4-carboxamide + L-glutamine = D-erythro-1-(imidazol-4-yl)glycerol 3-phosphate + 5-amino-1-(5-phospho-beta-D-ribosyl)imidazole-4-carboxamide + L-glutamate + H(+). The enzyme catalyses L-glutamine + H2O = L-glutamate + NH4(+). It participates in amino-acid biosynthesis; L-histidine biosynthesis; L-histidine from 5-phospho-alpha-D-ribose 1-diphosphate: step 5/9. Functionally, IGPS catalyzes the conversion of PRFAR and glutamine to IGP, AICAR and glutamate. The HisH subunit catalyzes the hydrolysis of glutamine to glutamate and ammonia as part of the synthesis of IGP and AICAR. The resulting ammonia molecule is channeled to the active site of HisF. This chain is Imidazole glycerol phosphate synthase subunit HisH, found in Salinibacter ruber (strain DSM 13855 / M31).